A 158-amino-acid polypeptide reads, in one-letter code: Small ribosomal subunit protein uS9 (158 aa).

The protein belongs to the universal ribosomal protein uS9 family.

The chain is Small ribosomal subunit protein uS9 from Rhodopseudomonas palustris (strain BisA53).